The sequence spans 132 residues: Small ribosomal subunit protein uS8 (132 aa).

This sequence belongs to the universal ribosomal protein uS8 family. As to quaternary structure, part of the 30S ribosomal subunit. Contacts proteins S5 and S12.

One of the primary rRNA binding proteins, it binds directly to 16S rRNA central domain where it helps coordinate assembly of the platform of the 30S subunit. The sequence is that of Small ribosomal subunit protein uS8 from Rhodococcus jostii (strain RHA1).